We begin with the raw amino-acid sequence, 1042 residues long: Diacylglycerol lipase-alpha (1042 aa).

The Cytoplasmic segment spans residues methionine 1–alanine 22. A helical transmembrane segment spans residues isoleucine 23 to leucine 43. At valine 44–arginine 60 the chain is on the extracellular side. The helical transmembrane segment at glycine 61–methionine 81 threads the bilayer. The Cytoplasmic segment spans residues arginine 82–arginine 101. A helical membrane pass occupies residues leucine 102–tyrosine 122. Residues tyrosine 123 to leucine 136 are Extracellular-facing. An N-linked (GlcNAc...) asparagine glycan is attached at asparagine 133. The chain crosses the membrane as a helical span at residues glycine 137 to phenylalanine 157. Residues aspartate 158–arginine 1042 are Cytoplasmic-facing. Residues serine 472 and aspartate 524 each act as charge relay system in the active site. Phosphoserine occurs at positions 727, 729, 732, 743, 782, 784, 806, 808, 833, 847, and 952. The interval leucine 846 to glycine 903 is disordered. Residues leucine 1014 to arginine 1042 are disordered. Threonine 1023 carries the post-translational modification Phosphothreonine.

The protein belongs to the AB hydrolase superfamily. Lipase family. In terms of assembly, interacts (via C-terminal) with CAMK2A; leading to the phosphorylation and inhibition of DAGLA enzymatic activity. Interacts (via PPXXF motif) with HOMER1 and HOMER2; this interaction is required for DAGLA membrane localization. The cofactor is Ca(2+). Post-translationally, phosphorylated at Ser-782 and Ser-808 by CAMK2A; phosphorylation by CAMK2A inhibits diacylglycerol lipase activity. As to expression, highly expressed in brain and pancreas.

It localises to the cell membrane. The protein localises to the postsynaptic density membrane. It is found in the early endosome membrane. The protein resides in the cell projection. Its subcellular location is the dendritic spine membrane. The enzyme catalyses a 1,2-diacyl-sn-glycerol + H2O = a 2-acylglycerol + a fatty acid + H(+). The catalysed reaction is 1-octadecanoyl-2-(5Z,8Z,11Z,14Z-eicosatetraenoyl)-sn-glycerol + H2O = 2-(5Z,8Z,11Z,14Z-eicosatetraenoyl)-glycerol + octadecanoate + H(+). It catalyses the reaction 1,2-di-(9Z-octadecenoyl)-sn-glycerol + H2O = 2-(9Z-octadecenoyl)-glycerol + (9Z)-octadecenoate + H(+). It carries out the reaction 1-(9Z-octadecenoyl)-2-(5Z,8Z,11Z,14Z-eicosatetraenoyl)-sn-glycerol + H2O = 2-(5Z,8Z,11Z,14Z-eicosatetraenoyl)-glycerol + (9Z)-octadecenoate + H(+). The enzyme catalyses 1-(9Z-octadecenoyl)-2-octadecanoyl-sn-glycerol + H2O = 2-octadecanoylglycerol + (9Z)-octadecenoate + H(+). The catalysed reaction is 1-(9Z-octadecenoyl)-2-(9Z,12Z-octadecadienoyl)-sn-glycerol + H2O = 2-(9Z,12Z-octadecadienoyl)-glycerol + (9Z)-octadecenoate + H(+). It catalyses the reaction 1-(9Z-octadecenoyl)-2-O-(5Z,8Z,11Z,14Z-eicosatetraenyl)-sn-glycerol + H2O = 2-O-(5Z,8Z,11Z,14Z)-eicosatetraenylglycerol + (9Z)-octadecenoate + H(+). Inhibited by 1,2,3-triazole urea covalent inhibitors KT172, DH376 and DO34. Inhibited by p-hydroxy-mercuri-benzoate and HgCl(2), but not to PMSF. Also inhibited by RHC80267. Diacylglycerol lipase activity is inhibited by the phosphorylation of Ser-782 and Ser-808 by CAMK2A. Its function is as follows. Serine hydrolase that hydrolyzes arachidonic acid-esterified diacylglycerols (DAGs) to produce the principal endocannabinoid, 2-arachidonoylglycerol (2-AG). Preferentially hydrolyzes sn-1 fatty acids from diacylglycerols (DAG) that contain arachidonic acid (AA) esterified at the sn-2 position to biosynthesize 2-AG. Has negligible activity against other lipids including monoacylglycerols and phospholipids. Plays a key role in regulating 2-AG signaling in the central nervous system (CNS). Regulates 2-AG involved in retrograde suppression at central synapses. Supports axonal growth during development and adult neurogenesis. Plays a role for eCB signaling in the physiological regulation of anxiety and depressive behaviors. Also regulates neuroinflammatory responses in the brain, in particular, LPS-induced microglial activation. This chain is Diacylglycerol lipase-alpha (DAGLA), found in Homo sapiens (Human).